Here is a 40-residue protein sequence, read N- to C-terminus: MDLRLVLVASPILLALGWAGFNIGRAAVGQLQLMIKRSRA.

A helical transmembrane segment spans residues 5–23; it reads LVLVASPILLALGWAGFNI.

Belongs to the PsbY family. As to quaternary structure, PSII is composed of 1 copy each of membrane proteins PsbA, PsbB, PsbC, PsbD, PsbE, PsbF, PsbH, PsbI, PsbJ, PsbK, PsbL, PsbM, PsbT, PsbX, PsbY, PsbZ, Psb30/Ycf12, peripheral proteins PsbO, CyanoQ (PsbQ), PsbU, PsbV and a large number of cofactors. It forms dimeric complexes.

The protein localises to the cellular thylakoid membrane. Loosely associated component of the core of photosystem II (PSII), it is not always seen in crystals. PSII is a light-driven water plastoquinone oxidoreductase, using light energy to abstract electrons from H(2)O, generating a proton gradient subsequently used for ATP formation. The protein is Photosystem II reaction center protein Y of Synechococcus sp. (strain WH7803).